A 573-amino-acid polypeptide reads, in one-letter code: Protein DSE1 (573 aa).

4 WD repeats span residues 144–185 (DFPP…GCAK), 315–351 (RKNT…GKPV), 356–395 (AKKG…NMKY), and 397–448 (ELVH…NGKG). A compositionally biased stretch (low complexity) spans 500 to 509 (SDSSMLSLSN). The tract at residues 500–519 (SDSSMLSLSNESDHSMTETS) is disordered. K553 is covalently cross-linked (Glycyl lysine isopeptide (Lys-Gly) (interchain with G-Cter in ubiquitin)).

It belongs to the WD repeat DSE1 family.

The protein localises to the bud neck. Functionally, involved in cell wall metabolism and required for the separation of the mother and daughter cells. The sequence is that of Protein DSE1 (DSE1) from Saccharomyces cerevisiae (strain ATCC 204508 / S288c) (Baker's yeast).